The following is a 374-amino-acid chain: MTENINEFRVNNFGAGPGCIPTEVLLEAQKELLNFQGCGKSIMEVSHRGKEFEGVINETKSNLKKLLSISDDYDILFLQGGASSLFAGIPMNLCENGVEDIVDFIVTGSWSKQASNDGKYFCKVNKVVDMEKEKFLTVTEPQSWKFSPDAKYVHYCDNETIHGIEMPISTPDHLPSNLIKVCDMSSNFLSKPIDVNKFDLIFAGAQKNAGISGITIVIIKKSLLLKTKPNVPSVFNFLKKSQNNSLDNTPPTFNIYITGLILKWIINKGGLSEIEKLNIAKAHALYEYIDNSNSFYKCSIDKNYRSRMNVVFRIQDGNTELEEKFIKEASKENITDIKGHRSVGGLRVSLYNAITIDQTLILINFMTNFHNNNK.

An L-glutamate-binding site is contributed by Arg48. Pyridoxal 5'-phosphate is bound by residues 82 to 83 (AS), Trp110, Thr160, Asp183, and Gln206. Lys207 is subject to N6-(pyridoxal phosphate)lysine. Pyridoxal 5'-phosphate is bound at residue 248–249 (NT).

It belongs to the class-V pyridoxal-phosphate-dependent aminotransferase family. SerC subfamily. As to quaternary structure, homodimer. Requires pyridoxal 5'-phosphate as cofactor.

It catalyses the reaction O-phospho-L-serine + 2-oxoglutarate = 3-phosphooxypyruvate + L-glutamate. The catalysed reaction is 4-(phosphooxy)-L-threonine + 2-oxoglutarate = (R)-3-hydroxy-2-oxo-4-phosphooxybutanoate + L-glutamate. It participates in amino-acid biosynthesis; L-serine biosynthesis; L-serine from 3-phospho-D-glycerate: step 2/3. Its pathway is cofactor biosynthesis; pyridoxine 5'-phosphate biosynthesis; pyridoxine 5'-phosphate from D-erythrose 4-phosphate: step 3/5. Its function is as follows. Catalyzes the reversible conversion of 3-phosphohydroxypyruvate to phosphoserine and of 3-hydroxy-2-oxo-4-phosphonooxybutanoate to phosphohydroxythreonine. The protein is Probable phosphoserine aminotransferase (serC) of Dictyostelium discoideum (Social amoeba).